The primary structure comprises 399 residues: Tryptophan synthase beta chain (399 aa).

K92 is modified (N6-(pyridoxal phosphate)lysine).

This sequence belongs to the TrpB family. In terms of assembly, tetramer of two alpha and two beta chains. Pyridoxal 5'-phosphate serves as cofactor.

It catalyses the reaction (1S,2R)-1-C-(indol-3-yl)glycerol 3-phosphate + L-serine = D-glyceraldehyde 3-phosphate + L-tryptophan + H2O. The protein operates within amino-acid biosynthesis; L-tryptophan biosynthesis; L-tryptophan from chorismate: step 5/5. The beta subunit is responsible for the synthesis of L-tryptophan from indole and L-serine. This Bordetella petrii (strain ATCC BAA-461 / DSM 12804 / CCUG 43448) protein is Tryptophan synthase beta chain.